The sequence spans 193 residues: Thymidine kinase (193 aa).

Residues 9–16 and 87–90 contribute to the ATP site; these read ASMNAGKS and DEAQ. The active-site Proton acceptor is Glu-88. Zn(2+)-binding residues include Cys-145, Cys-147, Cys-182, and His-185.

It belongs to the thymidine kinase family. In terms of assembly, homotetramer.

The protein resides in the cytoplasm. It catalyses the reaction thymidine + ATP = dTMP + ADP + H(+). The chain is Thymidine kinase from Zymomonas mobilis subsp. mobilis (strain ATCC 31821 / ZM4 / CP4).